A 242-amino-acid polypeptide reads, in one-letter code: Placenta-expressed transcript 1 protein (242 aa).

The first 26 residues, 1 to 26 (MAILRSLLLPLGLLLCLWLLCSPASC), serve as a signal peptide directing secretion. The Extracellular segment spans residues 27 to 220 (TNSTTNCKPF…TTHKSSANRA (194 aa)). N-linked (GlcNAc...) asparagine glycans are attached at residues asparagine 28, asparagine 81, and asparagine 106. The disordered stretch occupies residues 162–209 (VITTPTHKPTPAPPKPTTNPQKTTTNHSIPTTSLPKPTTSLYTSHPKL). Residues 169–178 (KPTPAPPKPT) are compositionally biased toward pro residues. Over residues 179–205 (TNPQKTTTNHSIPTTSLPKPTTSLYTS) the composition is skewed to low complexity. The chain crosses the membrane as a helical span at residues 221–241 (FLCPVREAIQILFIFLIGTLL). Phenylalanine 242 is a topological domain (cytoplasmic).

In terms of processing, N-glycosylated.

Its subcellular location is the membrane. It localises to the apical cell membrane. Modulates leading keratinocyte migration and cellular adhesion to matrix proteins during a wound-healing response and promotes wound repair. May play a role during trichilemmal differentiation of the hair follicle. The chain is Placenta-expressed transcript 1 protein (PLET1) from Bos taurus (Bovine).